Here is a 437-residue protein sequence, read N- to C-terminus: MHNTAVILAAGLGTRMKSSRPKVLHHIAGRPMLAHLLAACKTAFAATVVVTGPDMDEVARAAAPHPTVIQRERLGTAHAALAAADHFGAGAVTLVYGDNPLVTGPTLQRLGARLGAGDAALVLLGTRPPEPGAFGRIIGPAGFAERIVEFADATEAERAVGLCNVGGFSAAAADMRRWLGNIGNDNAKGEYYLTDLVAVARAEGASVAVVEAPWDECRGVNSRAELAAAEAAMQSRLRAAALAAGVTMTAPETVFLAADTALAADVTIEPHVVFGPGVTVGPDVTIRAFSHLEGCAISAGAIIGPYARLRPGSDIGAGAHVGNFVELKAARLGAGAKANHLTYLGDAEIGPRANIGAGTITCNYDGFAKHRTTIGADAFIGSDVALVAPVSVGDRAIIAAGSVITDPVAADALALARGRQVEKPGRAAELRMTKGKR.

The tract at residues 1-223 (MHNTAVILAA…WDECRGVNSR (223 aa)) is pyrophosphorylase. Residues 8 to 11 (LAAG), Lys-22, Gln-70, 75 to 76 (GT), 96 to 98 (YGD), Gly-135, Glu-149, Asn-164, and Asn-221 each bind UDP-N-acetyl-alpha-D-glucosamine. Asp-98 is a Mg(2+) binding site. Asn-221 is a binding site for Mg(2+). The interval 224–244 (AELAAAEAAMQSRLRAAALAA) is linker. The N-acetyltransferase stretch occupies residues 245–437 (GVTMTAPETV…AELRMTKGKR (193 aa)). Residues Arg-310 and Lys-328 each contribute to the UDP-N-acetyl-alpha-D-glucosamine site. Catalysis depends on His-340, which acts as the Proton acceptor. Positions 343 and 354 each coordinate UDP-N-acetyl-alpha-D-glucosamine. Acetyl-CoA contacts are provided by residues Ala-357, 363-364 (NY), Ser-382, Ala-400, and Arg-417.

The protein in the N-terminal section; belongs to the N-acetylglucosamine-1-phosphate uridyltransferase family. In the C-terminal section; belongs to the transferase hexapeptide repeat family. As to quaternary structure, homotrimer. Requires Mg(2+) as cofactor.

The protein resides in the cytoplasm. It catalyses the reaction alpha-D-glucosamine 1-phosphate + acetyl-CoA = N-acetyl-alpha-D-glucosamine 1-phosphate + CoA + H(+). The catalysed reaction is N-acetyl-alpha-D-glucosamine 1-phosphate + UTP + H(+) = UDP-N-acetyl-alpha-D-glucosamine + diphosphate. It functions in the pathway nucleotide-sugar biosynthesis; UDP-N-acetyl-alpha-D-glucosamine biosynthesis; N-acetyl-alpha-D-glucosamine 1-phosphate from alpha-D-glucosamine 6-phosphate (route II): step 2/2. It participates in nucleotide-sugar biosynthesis; UDP-N-acetyl-alpha-D-glucosamine biosynthesis; UDP-N-acetyl-alpha-D-glucosamine from N-acetyl-alpha-D-glucosamine 1-phosphate: step 1/1. Its pathway is bacterial outer membrane biogenesis; LPS lipid A biosynthesis. Catalyzes the last two sequential reactions in the de novo biosynthetic pathway for UDP-N-acetylglucosamine (UDP-GlcNAc). The C-terminal domain catalyzes the transfer of acetyl group from acetyl coenzyme A to glucosamine-1-phosphate (GlcN-1-P) to produce N-acetylglucosamine-1-phosphate (GlcNAc-1-P), which is converted into UDP-GlcNAc by the transfer of uridine 5-monophosphate (from uridine 5-triphosphate), a reaction catalyzed by the N-terminal domain. This is Bifunctional protein GlmU from Acidiphilium cryptum (strain JF-5).